A 184-amino-acid polypeptide reads, in one-letter code: Ribosome-recycling factor (184 aa).

Belongs to the RRF family.

It localises to the cytoplasm. Its function is as follows. Responsible for the release of ribosomes from messenger RNA at the termination of protein biosynthesis. May increase the efficiency of translation by recycling ribosomes from one round of translation to another. The sequence is that of Ribosome-recycling factor from Stenotrophomonas maltophilia (strain R551-3).